The primary structure comprises 283 residues: 32 kDa beta-galactoside-binding lectin (283 aa).

Galectin domains are found at residues 17 to 148 (YRSL…VHWG) and 156 to 283 (YESG…IQIQ). 217 to 223 (WGNEERE) is a binding site for a beta-D-galactoside.

(Microbial infection) Interacts (via domain galectin 2) with goat TMEM147. Interacts (via domain galectin 1) with goat TMEM63A.

It is found in the membrane. Its function is as follows. Binds galactose. Exerts immunomodulatory effects on host peripheral blood mononuclear cells to down-regulate host immune response. Hemagglutinates human, dog, rabbit, chicken and mouse erythrocytes but does not hemagglutinate the erythrocytes of goat, its natural host. The protein is 32 kDa beta-galactoside-binding lectin (GAL-1) of Haemonchus contortus (Barber pole worm).